The following is a 427-amino-acid chain: Methylenetetrahydrofolate--tRNA-(uracil-5-)-methyltransferase TrmFO (427 aa).

6-11 is an FAD binding site; the sequence is GAGLAG.

It belongs to the MnmG family. TrmFO subfamily. Requires FAD as cofactor.

The protein resides in the cytoplasm. It catalyses the reaction uridine(54) in tRNA + (6R)-5,10-methylene-5,6,7,8-tetrahydrofolate + NADH + H(+) = 5-methyluridine(54) in tRNA + (6S)-5,6,7,8-tetrahydrofolate + NAD(+). The enzyme catalyses uridine(54) in tRNA + (6R)-5,10-methylene-5,6,7,8-tetrahydrofolate + NADPH + H(+) = 5-methyluridine(54) in tRNA + (6S)-5,6,7,8-tetrahydrofolate + NADP(+). Catalyzes the folate-dependent formation of 5-methyl-uridine at position 54 (M-5-U54) in all tRNAs. The chain is Methylenetetrahydrofolate--tRNA-(uracil-5-)-methyltransferase TrmFO from Acholeplasma laidlawii (strain PG-8A).